The chain runs to 172 residues: Scytalone dehydratase-like protein Arp1 (172 aa).

Residue tyrosine 49 coordinates substrate. Residues histidine 84 and histidine 109 contribute to the active site. Asparagine 130 is a binding site for substrate.

This sequence belongs to the scytalone dehydratase family. In terms of assembly, homotrimer. Each subunit contains an active site, located in the central part of the hydrophobic core of the monomer, which functions independently.

Its function is as follows. Scytalone dehydratase-like protein; part of the Pks2 gene cluster that mediates the formation of infectious structures (appressoria), enabling these fungi to kill insects faster. The product of the Pks2 gene cluster is different from the one of Pks1 and has still not been identified. This chain is Scytalone dehydratase-like protein Arp1, found in Metarhizium robertsii (strain ARSEF 23 / ATCC MYA-3075) (Metarhizium anisopliae (strain ARSEF 23)).